A 311-amino-acid chain; its full sequence is Transmembrane protein 177 (311 aa).

Over 1-17 the chain is Mitochondrial matrix; sequence MAGPLWRAAVFIQRHRT. The chain crosses the membrane as a helical span at residues 18–38; that stretch reads SLLVGSCVGLFGVQISFHLFP. Topologically, residues 39–164 are mitochondrial intermembrane; the sequence is DPIVQWLYQY…AKEVVYLESG (126 aa). A helical transmembrane segment spans residues 165–185; sequence MAALQTLPAPVCLAGTWAISV. The Mitochondrial matrix portion of the chain corresponds to 186 to 197; it reads GAKHALGLYGGP. A helical membrane pass occupies residues 198-218; it reads MSLRAAFNLVAIVVGYVAYAF. The Mitochondrial intermembrane segment spans residues 219 to 311; sequence SKDSLTVALE…WRAKVSPGHF (93 aa).

This sequence belongs to the TMEM177 family. As to quaternary structure, found in a complex with COX20, COA6, MT-CO2/COX2, COX18, SCO1 and SCO2. Interacts with COX20. Interacts with COX1, MT-CO2/COX2, SCO1 and SCO2 in a COX20-dependent manner.

The protein resides in the mitochondrion inner membrane. In terms of biological role, plays a role in the early steps of cytochrome c oxidase subunit II (MT-CO2/COX2) maturation and is required for the stabilization of COX20 and the newly synthesized MT-CO2/COX2 protein. The chain is Transmembrane protein 177 (Tmem177) from Rattus norvegicus (Rat).